Here is a 330-residue protein sequence, read N- to C-terminus: Ferredoxin--NADP reductase (330 aa).

Residues Glu-35, Gln-43, Tyr-48, Val-90, Phe-123, Asp-285, and Thr-326 each contribute to the FAD site.

Belongs to the ferredoxin--NADP reductase type 2 family. In terms of assembly, homodimer. It depends on FAD as a cofactor.

The catalysed reaction is 2 reduced [2Fe-2S]-[ferredoxin] + NADP(+) + H(+) = 2 oxidized [2Fe-2S]-[ferredoxin] + NADPH. The protein is Ferredoxin--NADP reductase of Streptococcus pyogenes serotype M6 (strain ATCC BAA-946 / MGAS10394).